A 514-amino-acid chain; its full sequence is MRLYLLSLILVFYASVSSASLDSVNFGRGGGWGSGNQGVLCGTHYCPPGSTCESKHGHYICRPGGLITAPSGGDSGGIWTGGDKHKKDCGGTGCCKEGQYCTKLDGKEQCVYYPDDKGPQCGGSFCREGEICVLEHGVLGCLENPVEDSKANCGLFHCNYNEYCIMVNGYLQCLFSNGTAPFACGLQTCVPPQLCVKVENCQQCVSPPRPDNNCGDKYCDDEHQCVRKGLGYECIPKRLTCETKKCEASQVCIMVNGDAQCIVPPAAAAAEIRINNFRFNRNSVQRNAKPAQQQRSAQHAKPAQHGKPAQHATQQQHAKPAQNAKPVQHNAQQQHAKPAQHAAQQQHAKPAQHVAQQQQQQHAKPAAHTAAKPVQHNAQQQHAKPAAHTAAKPVQHNAAQQHAKPAAHGAKPAVNAARPVQHNAAQQHAKPAAHTAAKPVQHNAAQQHAKPAAKPAKLTNAQKLQQEHQRQEALAKQQARIRQQNLVKQAAQKKQTSQRAASKNQARPATQKRN.

An N-terminal signal peptide occupies residues 1–18; the sequence is MRLYLLSLILVFYASVSS. 2 Follistatin-like domains span residues 40-62 and 240-262; these read LCGTHYCPPGSTCESKHGHYICR and TCETKKCEASQVCIMVNGDAQCI. The segment covering 285–297 has biased composition (polar residues); sequence QRNAKPAQQQRSA. Positions 285-514 are disordered; sequence QRNAKPAQQQ…QARPATQKRN (230 aa). Low complexity-rich tracts occupy residues 328 to 391, 398 to 413, and 424 to 457; these read QHNA…HTAA, AAQQHAKPAAHGAKPA, and AAQQHAKPAAHTAAKPVQHNAAQQHAKPAAKPAK. Residues 480–508 show a composition bias toward polar residues; sequence RIRQQNLVKQAAQKKQTSQRAASKNQARP.

The chain is Prespore vesicle protein (psvA) from Dictyostelium discoideum (Social amoeba).